Consider the following 995-residue polypeptide: Integrator complex subunit 8 (995 aa).

T18 carries the phosphothreonine modification. The WFEF motif motif lies at 24–29 (WFEFLL). 4 TPR repeats span residues 250–288 (CQVC…IAEI), 320–356 (SQQL…SLPV), 570–603 (VYIL…VTEF), and 833–866 (HSWL…CSDF).

This sequence belongs to the Integrator subunit 8 family. Component of the Integrator complex, composed of core subunits INTS1, INTS2, INTS3, INTS4, INTS5, INTS6, INTS7, INTS8, INTS9/RC74, INTS10, INTS11/CPSF3L, INTS12, INTS13, INTS14 and INTS15. The core complex associates with protein phosphatase 2A subunits PPP2CA and PPP2R1A, to form the Integrator-PP2A (INTAC) complex.

The protein resides in the nucleus. It is found in the chromosome. In terms of biological role, component of the integrator complex, a multiprotein complex that terminates RNA polymerase II (Pol II) transcription in the promoter-proximal region of genes. The integrator complex provides a quality checkpoint during transcription elongation by driving premature transcription termination of transcripts that are unfavorably configured for transcriptional elongation: the complex terminates transcription by (1) catalyzing dephosphorylation of the C-terminal domain (CTD) of Pol II subunit POLR2A/RPB1 and SUPT5H/SPT5, (2) degrading the exiting nascent RNA transcript via endonuclease activity and (3) promoting the release of Pol II from bound DNA. The integrator complex is also involved in terminating the synthesis of non-coding Pol II transcripts, such as enhancer RNAs (eRNAs), small nuclear RNAs (snRNAs), telomerase RNAs and long non-coding RNAs (lncRNAs). Within the integrator complex, INTS8 is required for the recruitment of protein phosphatase 2A (PP2A) to transcription pause-release checkpoint. This is Integrator complex subunit 8 from Homo sapiens (Human).